Reading from the N-terminus, the 367-residue chain is Methylthioribose-1-phosphate isomerase (367 aa).

Substrate-binding positions include 48 to 50 (RGA), arginine 91, and glutamine 215. The active-site Proton donor is the aspartate 256. 266–267 (NK) contacts substrate.

Belongs to the eIF-2B alpha/beta/delta subunits family. MtnA subfamily.

It carries out the reaction 5-(methylsulfanyl)-alpha-D-ribose 1-phosphate = 5-(methylsulfanyl)-D-ribulose 1-phosphate. It functions in the pathway amino-acid biosynthesis; L-methionine biosynthesis via salvage pathway; L-methionine from S-methyl-5-thio-alpha-D-ribose 1-phosphate: step 1/6. In terms of biological role, catalyzes the interconversion of methylthioribose-1-phosphate (MTR-1-P) into methylthioribulose-1-phosphate (MTRu-1-P). The sequence is that of Methylthioribose-1-phosphate isomerase from Syntrophus aciditrophicus (strain SB).